The following is a 377-amino-acid chain: Tryptophan 2,3-dioxygenase (377 aa).

Substrate contacts are provided by residues 57–61 (FIITH) and Arg128. His313 contacts heme. A substrate-binding site is contributed by Thr328.

This sequence belongs to the tryptophan 2,3-dioxygenase family. In terms of assembly, homotetramer. Dimer of dimers. Requires heme as cofactor.

It carries out the reaction L-tryptophan + O2 = N-formyl-L-kynurenine. Its pathway is amino-acid degradation; L-tryptophan degradation via kynurenine pathway; L-kynurenine from L-tryptophan: step 1/2. It participates in pigment biosynthesis; ommochrome biosynthesis. In terms of biological role, heme-dependent dioxygenase that catalyzes the oxidative cleavage of the L-tryptophan (L-Trp) pyrrole ring and converts L-tryptophan to N-formyl-L-kynurenine. Catalyzes the oxidative cleavage of the indole moiety. The sequence is that of Tryptophan 2,3-dioxygenase from Drosophila grimshawi (Hawaiian fruit fly).